A 593-amino-acid chain; its full sequence is Proline--tRNA ligase (593 aa).

Belongs to the class-II aminoacyl-tRNA synthetase family. ProS type 1 subfamily. In terms of assembly, homodimer.

Its subcellular location is the cytoplasm. It carries out the reaction tRNA(Pro) + L-proline + ATP = L-prolyl-tRNA(Pro) + AMP + diphosphate. Catalyzes the attachment of proline to tRNA(Pro) in a two-step reaction: proline is first activated by ATP to form Pro-AMP and then transferred to the acceptor end of tRNA(Pro). As ProRS can inadvertently accommodate and process non-cognate amino acids such as alanine and cysteine, to avoid such errors it has two additional distinct editing activities against alanine. One activity is designated as 'pretransfer' editing and involves the tRNA(Pro)-independent hydrolysis of activated Ala-AMP. The other activity is designated 'posttransfer' editing and involves deacylation of mischarged Ala-tRNA(Pro). The misacylated Cys-tRNA(Pro) is not edited by ProRS. The chain is Proline--tRNA ligase from Synechococcus sp. (strain CC9605).